Reading from the N-terminus, the 105-residue chain is Putative ferredoxin-3 (105 aa).

2 4Fe-4S ferredoxin-type domains span residues 17 to 46 (YLTAIDAMTCIGCGRCFKVCSREVMHLHGI) and 70 to 100 (TIMVVDHAGRCIGCGACARVCPKNCQTHVAA). [4Fe-4S] cluster contacts are provided by Cys26, Cys29, Cys32, Cys36, Cys80, Cys83, Cys86, and Cys90.

[4Fe-4S] cluster is required as a cofactor.

Functionally, ferredoxins are iron-sulfur proteins that transfer electrons in a wide variety of metabolic reactions. The protein is Putative ferredoxin-3 (fdxB) of Sinorhizobium fredii (strain NBRC 101917 / NGR234).